The following is an 83-amino-acid chain: Apolipoprotein C-I, acidic form (83 aa).

An N-terminal signal peptide occupies residues 1–26 (MRLFLSLPVLVVVLSIVLEGPAPAQG).

The protein belongs to the apolipoprotein C1 family.

The protein localises to the secreted. The protein is Apolipoprotein C-I, acidic form (APOC1A) of Pan paniscus (Pygmy chimpanzee).